The following is a 504-amino-acid chain: Glycerol kinase (504 aa).

An ADP-binding site is contributed by threonine 12. The ATP site is built by threonine 12, threonine 13, and serine 14. Position 12 (threonine 12) interacts with sn-glycerol 3-phosphate. Residue arginine 16 coordinates ADP. Sn-glycerol 3-phosphate is bound by residues arginine 82, glutamate 83, tyrosine 134, and aspartate 249. 5 residues coordinate glycerol: arginine 82, glutamate 83, tyrosine 134, aspartate 249, and glutamine 250. ADP contacts are provided by threonine 271 and glycine 315. ATP-binding residues include threonine 271, glycine 315, glutamine 319, and glycine 416. ADP is bound by residues glycine 416 and asparagine 420.

The protein belongs to the FGGY kinase family.

The catalysed reaction is glycerol + ATP = sn-glycerol 3-phosphate + ADP + H(+). It participates in polyol metabolism; glycerol degradation via glycerol kinase pathway; sn-glycerol 3-phosphate from glycerol: step 1/1. Inhibited by fructose 1,6-bisphosphate (FBP). Key enzyme in the regulation of glycerol uptake and metabolism. Catalyzes the phosphorylation of glycerol to yield sn-glycerol 3-phosphate. The chain is Glycerol kinase from Mycobacteroides abscessus (strain ATCC 19977 / DSM 44196 / CCUG 20993 / CIP 104536 / JCM 13569 / NCTC 13031 / TMC 1543 / L948) (Mycobacterium abscessus).